Here is a 311-residue protein sequence, read N- to C-terminus: MKPTAIFLMGPTASGKTDLAIQLRSSLPVEVISVDSALIYKGMDIGTAKPSKEELALAPHRLIDILDPSESYSAMNFRDDALREMADITAQGKIPLLVGGTMLYYKALIEGLSPLPSADENIRAELEQKAAQQGWAALHTELAKIDPISAARINPSDSQRINRALEVFYITGKSLTELTEEKGEALPYDFVQFAIAPQDRHVLHERIEQRFHKMIELGFQAEVEKLYARGDLNINLPSIRCVGYRQMWEYLQGDYDHEEMIFRGICATRQLAKRQLTWLRGWKTPIQWLDSLQPQQAKETVLRHLDSYQKG.

10–17 (GPTASGKT) contributes to the ATP binding site. 12–17 (TASGKT) contributes to the substrate binding site. Interaction with substrate tRNA stretches follow at residues 35–38 (DSAL), 159–163 (QRINR), and 240–245 (RCVGYR).

The protein belongs to the IPP transferase family. As to quaternary structure, monomer. Mg(2+) serves as cofactor.

It catalyses the reaction adenosine(37) in tRNA + dimethylallyl diphosphate = N(6)-dimethylallyladenosine(37) in tRNA + diphosphate. Functionally, catalyzes the transfer of a dimethylallyl group onto the adenine at position 37 in tRNAs that read codons beginning with uridine, leading to the formation of N6-(dimethylallyl)adenosine (i(6)A). This is tRNA dimethylallyltransferase from Haemophilus influenzae (strain 86-028NP).